The chain runs to 90 residues: Acylphosphatase (90 aa).

Residues 3-90 (AIEVDVFGLV…FETNDFAIRG (88 aa)) enclose the Acylphosphatase-like domain. Catalysis depends on residues Arg-18 and Asn-36.

Belongs to the acylphosphatase family.

The enzyme catalyses an acyl phosphate + H2O = a carboxylate + phosphate + H(+). This chain is Acylphosphatase (acyP), found in Leuconostoc mesenteroides subsp. mesenteroides (strain ATCC 8293 / DSM 20343 / BCRC 11652 / CCM 1803 / JCM 6124 / NCDO 523 / NBRC 100496 / NCIMB 8023 / NCTC 12954 / NRRL B-1118 / 37Y).